The chain runs to 110 residues: UPF0122 protein SMU_1061 (110 aa).

The protein belongs to the UPF0122 family.

Might take part in the signal recognition particle (SRP) pathway. This is inferred from the conservation of its genetic proximity to ftsY/ffh. May be a regulatory protein. The chain is UPF0122 protein SMU_1061 (ylxM) from Streptococcus mutans serotype c (strain ATCC 700610 / UA159).